The chain runs to 178 residues: uncharacterized protein (178 aa).

Transmembrane regions (helical) follow at residues 3 to 23, 56 to 76, 101 to 121, and 150 to 170; these read IPII…FISI, IFLM…NLIF, LILP…VAGF, and LSLI…YITP.

This sequence to M.jannaschii MJ0706 and Synechocystis PCC 6803 slr1478.

It is found in the cell membrane. This is an uncharacterized protein from Methanocaldococcus jannaschii (strain ATCC 43067 / DSM 2661 / JAL-1 / JCM 10045 / NBRC 100440) (Methanococcus jannaschii).